The following is a 313-amino-acid chain: Protein ABA AND ROS SENSITIVE 1 (313 aa).

Positions 5–12 (AKKKAMFR) match the Nuclear localization signal 1 motif. The segment at 39–61 (CRVCNVVLKSESLWDVHQASRKH) adopts a C2H2-type zinc-finger fold. A compositionally biased stretch (basic and acidic residues) spans 115–131 (ARAEVEPAKSKNLEQSK). Disordered regions lie at residues 115–189 (ARAE…LPTG), 232–254 (MEEE…QRSY), and 271–313 (ARLA…AQHL). Residues 155 to 176 (TDSSNTKTTSEPKQSQTQTTGP) are compositionally biased toward polar residues. A compositionally biased stretch (acidic residues) spans 232-248 (MEEEEVDAAETIEEEEQ). Positions 232–271 (MEEEEVDAAETIEEEEQREQRSYKEKVEILKRKKMELKAA) form a coiled coil. Positions 274-281 (AKRSKTSE) match the Nuclear localization signal 2 motif. Residues 293-305 (ESPSDEEDDEDSA) are compositionally biased toward acidic residues.

Mostly expressed in siliques and, to a lower extent, in roots. Barely deteclable in leaves and stems.

The protein localises to the nucleus. It localises to the cytoplasm. Essential for breaking seed dormancy before seed germination. Prevents reactive oxygen species (ROS) accumulation in response to abscisic acid (ABA) and oxidative stress, probably by repressing the accumulation of ABA-induced ROS-scavenging enzymes (e.g. CSD3). This is Protein ABA AND ROS SENSITIVE 1 from Arabidopsis thaliana (Mouse-ear cress).